We begin with the raw amino-acid sequence, 100 residues long: Large ribosomal subunit protein bL21 (100 aa).

Belongs to the bacterial ribosomal protein bL21 family. As to quaternary structure, part of the 50S ribosomal subunit. Contacts protein L20.

In terms of biological role, this protein binds to 23S rRNA in the presence of protein L20. In Wolbachia pipientis wMel, this protein is Large ribosomal subunit protein bL21.